Reading from the N-terminus, the 344-residue chain is N-acetyl-gamma-glutamyl-phosphate reductase (344 aa).

Cys-148 is a catalytic residue.

This sequence belongs to the NAGSA dehydrogenase family. Type 1 subfamily.

The protein localises to the cytoplasm. The catalysed reaction is N-acetyl-L-glutamate 5-semialdehyde + phosphate + NADP(+) = N-acetyl-L-glutamyl 5-phosphate + NADPH + H(+). It functions in the pathway amino-acid biosynthesis; L-arginine biosynthesis; N(2)-acetyl-L-ornithine from L-glutamate: step 3/4. Its function is as follows. Catalyzes the NADPH-dependent reduction of N-acetyl-5-glutamyl phosphate to yield N-acetyl-L-glutamate 5-semialdehyde. The protein is N-acetyl-gamma-glutamyl-phosphate reductase of Clostridium botulinum (strain Alaska E43 / Type E3).